Reading from the N-terminus, the 285-residue chain is Protein phosphatase 1 regulatory subunit 3C (285 aa).

The short motif at 72–75 (KVVF) is the PP1-binding motif element. Residues 133 to 241 (RKRLMKNSVC…NNNGKNYALV (109 aa)) form the CBM21 domain.

In terms of assembly, interacts with PPP1CC catalytic subunit of PP1 and associates with glycogen. Forms complexes with glycogen phosphorylase, glycogen synthase and phosphorylase kinase which is necessary for its regulation of PP1 activity. In terms of tissue distribution, ubiquitously expressed in the examined tissues including brain, muscle, liver and spleen under normoxic condition. Its expression is higher in insulin sensitive tissues (liver and muscle) than in the brain and spleen. Significantly increased expression in the liver and muscle under short-term (1-12 hours) hypoxia exposure. Significantly increased expression after long-term (natural) hypoxia exposure in liver and spleen. No significant differences in expression in brain for any time periods.

Acts as a glycogen-targeting subunit for PP1 and regulates its activity. Activates glycogen synthase, reduces glycogen phosphorylase activity and limits glycogen breakdown. The chain is Protein phosphatase 1 regulatory subunit 3C from Clarias batrachus (Walking catfish).